A 357-amino-acid polypeptide reads, in one-letter code: Gene 58 protein (357 aa).

The protein belongs to the herpesviridae BMRF2 family.

This chain is Gene 58 protein (58), found in Saimiri sciureus (Common squirrel monkey).